Here is a 393-residue protein sequence, read N- to C-terminus: Elongation factor Tu (393 aa).

The tr-type G domain occupies 10–203; the sequence is KPHVNIGTIG…AVDNYIPEPV (194 aa). The interval 19–26 is G1; sequence GHVDHGKT. Residue 19-26 coordinates GTP; that stretch reads GHVDHGKT. Thr-26 contacts Mg(2+). Residues 60–64 form a G2 region; that stretch reads GITIS. The segment at 81-84 is G3; it reads DCPG. Residues 81–85 and 136–139 contribute to the GTP site; these read DCPGH and NKVD. Residues 136–139 are G4; the sequence is NKVD. Residues 173–175 are G5; that stretch reads SAL.

This sequence belongs to the TRAFAC class translation factor GTPase superfamily. Classic translation factor GTPase family. EF-Tu/EF-1A subfamily. Monomer.

It localises to the cytoplasm. It catalyses the reaction GTP + H2O = GDP + phosphate + H(+). GTP hydrolase that promotes the GTP-dependent binding of aminoacyl-tRNA to the A-site of ribosomes during protein biosynthesis. This chain is Elongation factor Tu, found in Chlorobium phaeovibrioides (strain DSM 265 / 1930) (Prosthecochloris vibrioformis (strain DSM 265)).